Reading from the N-terminus, the 969-residue chain is RNA polymerase-associated protein RapA (969 aa).

The 171-residue stretch at 164–334 folds into the Helicase ATP-binding domain; it reads EVGRRHAPRV…FARLRLLDSD (171 aa). Residue 177 to 184 coordinates ATP; the sequence is DEVGLGKT. The DEAH box motif lies at 280 to 283; the sequence is DEAH. The Helicase C-terminal domain maps to 492–668; it reads RVNWLLEKLK…GSNEALDDVI (177 aa).

Belongs to the SNF2/RAD54 helicase family. RapA subfamily. As to quaternary structure, interacts with the RNAP. Has a higher affinity for the core RNAP than for the holoenzyme. Its ATPase activity is stimulated by binding to RNAP.

Functionally, transcription regulator that activates transcription by stimulating RNA polymerase (RNAP) recycling in case of stress conditions such as supercoiled DNA or high salt concentrations. Probably acts by releasing the RNAP, when it is trapped or immobilized on tightly supercoiled DNA. Does not activate transcription on linear DNA. Probably not involved in DNA repair. The chain is RNA polymerase-associated protein RapA from Vibrio vulnificus (strain CMCP6).